The chain runs to 291 residues: Ribosomal RNA small subunit methyltransferase A (291 aa).

Residues His21, Leu23, Gly48, Glu70, Asp95, and Asn115 each coordinate S-adenosyl-L-methionine.

The protein belongs to the class I-like SAM-binding methyltransferase superfamily. rRNA adenine N(6)-methyltransferase family. RsmA subfamily.

It localises to the cytoplasm. The catalysed reaction is adenosine(1518)/adenosine(1519) in 16S rRNA + 4 S-adenosyl-L-methionine = N(6)-dimethyladenosine(1518)/N(6)-dimethyladenosine(1519) in 16S rRNA + 4 S-adenosyl-L-homocysteine + 4 H(+). Specifically dimethylates two adjacent adenosines (A1518 and A1519) in the loop of a conserved hairpin near the 3'-end of 16S rRNA in the 30S particle. May play a critical role in biogenesis of 30S subunits. The sequence is that of Ribosomal RNA small subunit methyltransferase A from Prochlorococcus marinus (strain NATL1A).